Reading from the N-terminus, the 263-residue chain is Flagellar L-ring protein (263 aa).

Residues 1 to 15 form the signal peptide; the sequence is MKRLLCLLLLTTLTG. The N-palmitoyl cysteine moiety is linked to residue Cys-16. A lipid anchor (S-diacylglycerol cysteine) is attached at Cys-16. Positions 123–143 are disordered; that stretch reads KSADAELSKSNDSSMDPLQVG.

It belongs to the FlgH family. In terms of assembly, the basal body constitutes a major portion of the flagellar organelle and consists of four rings (L,P,S, and M) mounted on a central rod.

Its subcellular location is the cell outer membrane. It localises to the bacterial flagellum basal body. In terms of biological role, assembles around the rod to form the L-ring and probably protects the motor/basal body from shearing forces during rotation. The protein is Flagellar L-ring protein of Aliivibrio fischeri (strain ATCC 700601 / ES114) (Vibrio fischeri).